A 35-amino-acid chain; its full sequence is UPF0387 membrane protein YohO (35 aa).

Residues 6 to 26 (IGVIALFLFMAFGGIGGVMLA) form a helical membrane-spanning segment.

The protein belongs to the UPF0387 family.

It localises to the cell inner membrane. This Escherichia coli O8 (strain IAI1) protein is UPF0387 membrane protein YohO.